A 319-amino-acid chain; its full sequence is mRNA decay activator protein ZFP36 (319 aa).

Residues methionine 1–histidine 15 are necessary for nuclear export. The tract at residues methionine 1–threonine 92 is necessary and sufficient for the association with mRNA decay enzymes and mRNA decay activation. Necessary for localization of ARE-containing mRNAs to processing bodies (PBs) stretches follow at residues methionine 1–leucine 166 and threonine 92–glutamate 319. Serine 52 is subject to Phosphoserine; by MAPKAPK2. The residue at position 58 (serine 58) is a Phosphoserine. The stretch at proline 63–glycine 67 is one P-P-P-P-G repeat. A compositionally biased stretch (pro residues) spans proline 65–threonine 84. Residues proline 65–arginine 95 form a disordered region. Phosphoserine is present on residues serine 80 and serine 82. At threonine 84 the chain carries Phosphothreonine. Serine 85 bears the Phosphoserine mark. Residues serine 85–serine 94 show a composition bias toward low complexity. The segment at threonine 87–proline 160 is necessary for nuclear localization. The tract at residues threonine 89–alanine 165 is necessary for RNA-binding. 2 consecutive C3H1-type zinc fingers follow at residues arginine 95–glycine 123 and lysine 133–threonine 161. Residues arginine 95–arginine 186 are necessary for interaction with PABPN1. Residues leucine 166 to glutamate 319 form a necessary for mRNA decay activation region. Position 178 is a phosphoserine; by MAPKAPK2 (serine 178). Positions phenylalanine 179–serine 188 are enriched in low complexity. The interval phenylalanine 179–leucine 309 is disordered. Residue serine 189 is modified to Phosphoserine. Residues proline 190–glycine 194 form a P-P-P-P-G repeat. Low complexity predominate over residues serine 196–serine 208. A Phosphoserine modification is found at serine 210. Residues proline 211 to glycine 215 form a P-P-P-P-G repeat. At serine 220 the chain carries Phosphoserine; by MAPK1; in vitro. Threonine 250 carries the phosphothreonine modification. Serine 269, serine 289, and serine 316 each carry phosphoserine. Over residues serine 279–serine 289 the composition is skewed to low complexity. The interaction with CNOT1 stretch occupies residues proline 305–glutamate 319.

Associates with cytoplasmic CCR4-NOT and PAN2-PAN3 deadenylase complexes to trigger ARE-containing mRNA deadenylation and decay processes. Part of a mRNA decay activation complex at least composed of poly(A)-specific exoribonucleases CNOT6, EXOSC2 and XRN1 and mRNA-decapping enzymes DCP1A and DCP2. Associates with the RNA exosome complex. Interacts (via phosphorylated form) with 14-3-3 proteins; these interactions promote exclusion of ZFP36 from cytoplasmic stress granules in response to arsenite treatment in a MAPKAPK2-dependent manner and does not prevent CCR4-NOT deadenylase complex recruitment or ZFP36-induced ARE-containing mRNA deadenylation and decay processes. Interacts with 14-3-3 proteins; these interactions occur in response to rapamycin in an Akt-dependent manner. Interacts with AGO2 and AGO4. Interacts (via C-terminus) with CNOT1; this interaction occurs in a RNA-independent manner and induces mRNA deadenylation. Interacts (via N-terminus) with CNOT6. Interacts with CNOT6L. Interacts (via C-terminus) with CNOT7; this interaction occurs in a RNA-independent manner, induces mRNA deadenylation and is inhibited in a phosphorylation MAPKAPK2-dependent manner. Interacts (via unphosphorylated form) with CNOT8; this interaction occurs in a RNA-independent manner and is inhibited in a phosphorylation MAPKAPK2-dependent manner. Interacts with DCP1A. Interacts (via N-terminus) with DCP2. Interacts with EDC3. Interacts (via N-terminus) with EXOSC2. Interacts with heat shock 70 kDa proteins. Interacts with KHSRP; this interaction increases upon cytokine-induced treatment. Interacts with MAP3K4; this interaction enhances the association with SH3KBP1/CIN85. Interacts with MAPKAPK2; this interaction occurs upon skeletal muscle satellite cell activation. Interacts with NCL. Interacts with NUP214; this interaction increases upon lipopolysaccharide (LPS) stimulation. Interacts with PABPC1; this interaction occurs in a RNA-dependent manner. Interacts (via hypophosphorylated form) with PABPN1 (via RRM domain and C-terminal arginine-rich region); this interaction occurs in the nucleus in a RNA-independent manner, decreases in presence of single-stranded poly(A) RNA-oligomer and in a p38 MAPK-dependent-manner and inhibits nuclear poly(A) tail synthesis. Interacts with PAN2. Interacts (via C3H1-type zinc finger domains) with PKM. Interacts (via C3H1-type zinc finger domains) with nuclear RNA poly(A) polymerase. Interacts with PPP2CA; this interaction occurs in LPS-stimulated cells and induces ZFP36 dephosphorylation, and hence may promote ARE-containing mRNAs decay. Interacts (via C-terminus) with PRR5L (via C-terminus); this interaction may accelerate ZFP36-mediated mRNA decay during stress. Interacts (via C-terminus) with SFN; this interaction occurs in a phosphorylation-dependent manner. Interacts (via extreme C-terminal region) with SH3KBP1/CIN85 (via SH3 domains); this interaction enhances MAP3K4-induced phosphorylation of ZFP36 at Ser-58 and Ser-85 and does not alter neither ZFP36 binding to ARE-containing transcripts nor TNF-alpha mRNA decay. Interacts with XRN1. Interacts (via C-terminus and Ser-178 phosphorylated form) with YWHAB; this interaction occurs in a p38/MAPKAPK2-dependent manner, increases cytoplasmic localization of ZFP36 and protects ZFP36 from Ser-178 dephosphorylation by serine/threonine phosphatase 2A, and hence may be crucial for stabilizing ARE-containing mRNAs. Interacts (via phosphorylated form) with YWHAE. Interacts (via C-terminus) with YWHAG; this interaction occurs in a phosphorylation-dependent manner. Interacts with YWHAH; this interaction occurs in a phosphorylation-dependent manner. Interacts with YWHAQ; this interaction occurs in a phosphorylation-dependent manner. Interacts with (via C-terminus) YWHAZ; this interaction occurs in a phosphorylation-dependent manner. Does not interact with SH3KBP1. Interacts (via the 4EHP-binding motif) with EIF4E2; the interaction is direct. Interacts (via P-P-P-P-G repeats) with GIGYF2; the interaction is direct. Post-translationally, phosphorylated. Phosphorylation at serine and/or threonine residues occurs in a p38 MAPK- and MAPKAPK2-dependent manner. Phosphorylated by MAPKAPK2 at Ser-52 and Ser-178; phosphorylation increases its stability and cytoplasmic localization, promotes binding to 14-3-3 adapter proteins and inhibits the recruitment of cytoplasmic CCR4-NOT and PAN2-PAN3 deadenylase complexes to the mRNA decay machinery, thereby inhibiting ZFP36-induced ARE-containing mRNA deadenylation and decay processes. Phosphorylation by MAPKAPK2 does not impair ARE-containing RNA-binding. Phosphorylated in a MAPKAPK2- and p38 MAPK-dependent manner upon skeletal muscle satellite cell activation; this phosphorylation inhibits ZFP36-mediated mRNA decay activity, and hence stabilizes MYOD1 mRNA. Phosphorylated by MAPK1 upon mitogen stimulation. Phosphorylated at Ser-58 and Ser-85; these phosphorylations increase in a SH3KBP1-dependent manner. Phosphorylated at serine and threonine residues in a pyruvate kinase PKM- and p38 MAPK-dependent manner. Phosphorylation at Ser-52 may participate in the PKM-mediated degradation of ZFP36 in a p38 MAPK-dependent manner. Dephosphorylated by serine/threonine phosphatase 2A at Ser-178. Ubiquitinated; pyruvate kinase (PKM)-dependent ubiquitination leads to proteasomal degradation through a p38 MAPK signaling pathway. In terms of tissue distribution, expressed in skeletal muscle satellite cells. Strongly expressed in differentiated adipocytes compared to preadipocytes (at protein level). Expressed in embryonic stem cells (ESCs). Expressed in heart, placenta, kidney, intestine, liver, lung, thymus, fat and spleen.

Its subcellular location is the nucleus. The protein resides in the cytoplasm. It is found in the cytoplasmic granule. It localises to the P-body. Functionally, zinc-finger RNA-binding protein that destabilizes numerous cytoplasmic AU-rich element (ARE)-containing mRNA transcripts by promoting their poly(A) tail removal or deadenylation, and hence provide a mechanism for attenuating protein synthesis. Acts as an 3'-untranslated region (UTR) ARE mRNA-binding adapter protein to communicate signaling events to the mRNA decay machinery. Recruits deadenylase CNOT7 (and probably the CCR4-NOT complex) via association with CNOT1, and hence promotes ARE-mediated mRNA deadenylation. Also functions by recruiting components of the cytoplasmic RNA decay machinery to the bound ARE-containing mRNAs. Self-regulates by destabilizing its own mRNA. Binds to 3'-UTR ARE of numerous mRNAs and of its own mRNA. Plays a role in anti-inflammatory responses; suppresses tumor necrosis factor (TNF)-alpha production by stimulating ARE-mediated TNF-alpha mRNA decay and several other inflammatory ARE-containing mRNAs in interferon (IFN)- and/or lipopolysaccharide (LPS)-induced macrophages. Also plays a role in the regulation of dendritic cell maturation at the post-transcriptional level, and hence operates as part of a negative feedback loop to limit the inflammatory response. Promotes ARE-mediated mRNA decay of hypoxia-inducible factor HIF1A mRNA during the response of endothelial cells to hypoxia. Positively regulates early adipogenesis of preadipocytes by promoting ARE-mediated mRNA decay of immediate early genes (IEGs). Negatively regulates hematopoietic/erythroid cell differentiation by promoting ARE-mediated mRNA decay of the transcription factor STAT5B mRNA. Plays a role in maintaining skeletal muscle satellite cell quiescence by promoting ARE-mediated mRNA decay of the myogenic determination factor MYOD1 mRNA. Also associates with and regulates the expression of non-ARE-containing target mRNAs at the post-transcriptional level, such as MHC class I mRNAs. Participates in association with argonaute RISC catalytic components in the ARE-mediated mRNA decay mechanism; assists microRNA (miRNA) targeting ARE-containing mRNAs. May also play a role in the regulation of cytoplasmic mRNA decapping; enhances decapping of ARE-containing RNAs, in vitro. Involved in the delivery of target ARE-mRNAs to processing bodies (PBs). In addition to its cytosolic mRNA-decay function, affects nuclear pre-mRNA processing. Negatively regulates nuclear poly(A)-binding protein PABPN1-stimulated polyadenylation activity on ARE-containing pre-mRNA during LPS-stimulated macrophages. Also involved in the regulation of stress granule (SG) and P-body (PB) formation and fusion. Plays a role in the regulation of keratinocyte proliferation, differentiation and apoptosis. Plays a role as a tumor suppressor by inhibiting cell proliferation in breast cancer cells. The polypeptide is mRNA decay activator protein ZFP36 (Mus musculus (Mouse)).